The following is a 557-amino-acid chain: Dihydroxy-acid dehydratase (557 aa).

Residue Cys49 coordinates [2Fe-2S] cluster. Position 81 (Asp81) interacts with Mg(2+). Cys122 contributes to the [2Fe-2S] cluster binding site. Residues Asp123 and Lys124 each contribute to the Mg(2+) site. Lys124 carries the N6-carboxylysine modification. Cys194 contributes to the [2Fe-2S] cluster binding site. Residue Glu446 coordinates Mg(2+). Ser472 serves as the catalytic Proton acceptor.

It belongs to the IlvD/Edd family. In terms of assembly, homodimer. The cofactor is [2Fe-2S] cluster. Mg(2+) serves as cofactor.

The enzyme catalyses (2R)-2,3-dihydroxy-3-methylbutanoate = 3-methyl-2-oxobutanoate + H2O. The catalysed reaction is (2R,3R)-2,3-dihydroxy-3-methylpentanoate = (S)-3-methyl-2-oxopentanoate + H2O. Its pathway is amino-acid biosynthesis; L-isoleucine biosynthesis; L-isoleucine from 2-oxobutanoate: step 3/4. The protein operates within amino-acid biosynthesis; L-valine biosynthesis; L-valine from pyruvate: step 3/4. Functions in the biosynthesis of branched-chain amino acids. Catalyzes the dehydration of (2R,3R)-2,3-dihydroxy-3-methylpentanoate (2,3-dihydroxy-3-methylvalerate) into 2-oxo-3-methylpentanoate (2-oxo-3-methylvalerate) and of (2R)-2,3-dihydroxy-3-methylbutanoate (2,3-dihydroxyisovalerate) into 2-oxo-3-methylbutanoate (2-oxoisovalerate), the penultimate precursor to L-isoleucine and L-valine, respectively. This is Dihydroxy-acid dehydratase from Prochlorococcus marinus (strain MIT 9301).